The following is a 203-amino-acid chain: MKKSIVVLFSAVLPFAVFADDAKELVSKLDVMQGIKANFSQKVTDQNGKLIQEGSGVIAMHQPDAFYWHLTAPDESLIVAKDNSVWVYNPFAEEVSILDMEDILKASPMALLVHRDEKRWNEYQIDRKGSCFDITPRQGVESAVDTVSVCFANNTLSDIRLTDAQGSTSHFSLSEQAAVTDADESLFQFQIPDGVSIDDQRRQ.

The signal sequence occupies residues 1–19 (MKKSIVVLFSAVLPFAVFA).

It belongs to the LolA family. Monomer.

The protein resides in the periplasm. Functionally, participates in the translocation of lipoproteins from the inner membrane to the outer membrane. Only forms a complex with a lipoprotein if the residue after the N-terminal Cys is not an aspartate (The Asp acts as a targeting signal to indicate that the lipoprotein should stay in the inner membrane). The chain is Outer-membrane lipoprotein carrier protein from Shewanella amazonensis (strain ATCC BAA-1098 / SB2B).